Reading from the N-terminus, the 246-residue chain is MTVYAIIGGTGLTQLEGLNIRQSLPMNTPYGAPSGEIQIGDYAGREVMFLARHGHPHRLPPHQVNYRANIWALKQAGAEAILAVNAVGGIHPAMGTGHFCVPHDLVDYTSGRQHTFFADDLEEVTHIDFSYPYSEALRVRLVAALAAEGCAFSDRGVYACTQGPRLETVAEIIRLERDGCDIVGMTGMPEAALARELELEYACLALVVNPAAGKSTAVITMAEIEQALRDGMGKVKATLARVLSAS.

Phosphate-binding positions include Thr10 and 52-53; that span reads RH. Position 185 (Met185) interacts with substrate. Thr186 is a binding site for phosphate. Residue 209–211 participates in substrate binding; it reads NPA.

This sequence belongs to the PNP/MTAP phosphorylase family. MTAP subfamily. As to quaternary structure, homotrimer.

The catalysed reaction is S-methyl-5'-thioinosine + phosphate = 5-(methylsulfanyl)-alpha-D-ribose 1-phosphate + hypoxanthine. It functions in the pathway purine metabolism; purine nucleoside salvage. Its function is as follows. Catalyzes the reversible phosphorylation of S-methyl-5'-thioinosine (MTI) to hypoxanthine and 5-methylthioribose-1-phosphate. Involved in the breakdown of S-methyl-5'-thioadenosine (MTA), a major by-product of polyamine biosynthesis. Catabolism of (MTA) occurs via deamination to MTI and phosphorolysis to hypoxanthine. In Pseudomonas syringae pv. tomato (strain ATCC BAA-871 / DC3000), this protein is Probable S-methyl-5'-thioinosine phosphorylase.